We begin with the raw amino-acid sequence, 532 residues long: [Pyruvate dehydrogenase [acetyl-transferring]]-phosphatase 2, mitochondrial (532 aa).

Residues 1–69 (MSSTVSYWIF…FALRKAYRHT (69 aa)) constitute a mitochondrion transit peptide. Residues 107–518 (NSVLRFESNQ…YRDDITVMVV (412 aa)) enclose the PPM-type phosphatase domain. Aspartate 144, glycine 145, aspartate 415, and aspartate 511 together coordinate Mn(2+).

Belongs to the PP2C family. Mg(2+) serves as cofactor.

It is found in the mitochondrion. It carries out the reaction O-phospho-L-seryl-[pyruvate dehydrogenase E1 alpha subunit] + H2O = L-seryl-[pyruvate dehydrogenase E1 alpha subunit] + phosphate. Mitochondrial enzyme that catalyzes the dephosphorylation and concomitant reactivation of the alpha subunit of the E1 component of the pyruvate dehydrogenase complex (PDC), thereby stimulating the conversion of pyruvate into acetyl-CoA. Acts as a crucial regulator of T cell metabolism and function, with a particular focus on T-helper Th17. This Mus musculus (Mouse) protein is [Pyruvate dehydrogenase [acetyl-transferring]]-phosphatase 2, mitochondrial (Pdp2).